Here is a 1479-residue protein sequence, read N- to C-terminus: Type VII secretion system protein EssC (1479 aa).

Residues 1–229 (MHKLIIKYNK…RPPQPIQKNN (229 aa)) are Cytoplasmic-facing. A helical membrane pass occupies residues 230 to 252 (TVIWRSIIPPLVMIALTVVIFLV). The Extracellular portion of the chain corresponds to 253 to 256 (RPIG). The chain crosses the membrane as a helical span at residues 257–279 (IYILMMIGMSTVTIVFGITTYFS). The Cytoplasmic portion of the chain corresponds to 280-1479 (EKKKYNKDVE…QAYQKIRWFK (1200 aa)). FtsK domains follow at residues 652–846 (DDIL…QDSN) and 997–1183 (QGPM…SEVS). Residues 672 to 679 (GTTGSGKS) and 1014 to 1021 (GSPGYGRT) contribute to the ATP site.

It belongs to the EssC family. In terms of assembly, homooligomer. Interacts with EsaE.

Its subcellular location is the cell membrane. Its function is as follows. Component of the type VII secretion system (Ess). Required for the secretion of substrates including EsxA and EsxB. However, unable to support secretion of the substrate protein EsxC. The sequence is that of Type VII secretion system protein EssC from Staphylococcus aureus (strain Mu50 / ATCC 700699).